The chain runs to 448 residues: MLEGYRGKALEFLSSHNVDVGDLIELQKDGLSIKGVVMPSYSKEDDIIVIKLDNGYNIGVSISGISNFKLVEKKRQNIQVNKGEQKPLKEKSEVKIISTGGTIVSKVEYETGAVRPALTTEEIINFMPEINEIAKIDAEVLFSILSENMKPEYWIKIAESAKKALDEGNLGVVIAHGTDTMAYTASALAFSFKSLTGPIVLVGSQRSSDRPSSDSPINLYSAILVAKNSPFAEVTINMHGESSDTYTLVHRGVKVRKMHTSRRDAFQSINDIPLAKVFWKEKEIKLLRNDYIKRKEENALDAKFDTRVFLLKYYPGINPEIIEYLISSGIRGIIVEGTGLGHTSTEFVDYFKKATKDGVFIGMTSQCLFGRVNMNVYTTGRLLQESGVTPLEDMLPETALVKLMWVLAHESDLDKIRSLMLTNFVGEINYRHVPEYFPRWFHDGIRLQ.

The 332-residue stretch at 92-423 (SEVKIISTGG…DKIRSLMLTN (332 aa)) folds into the Asparaginase/glutaminase domain. Catalysis depends on residues Thr-102, Thr-178, Asp-179, and Lys-257.

This sequence belongs to the asparaginase 1 family. GatD subfamily. As to quaternary structure, heterodimer of GatD and GatE.

It catalyses the reaction L-glutamyl-tRNA(Gln) + L-glutamine + ATP + H2O = L-glutaminyl-tRNA(Gln) + L-glutamate + ADP + phosphate + H(+). Allows the formation of correctly charged Gln-tRNA(Gln) through the transamidation of misacylated Glu-tRNA(Gln) in organisms which lack glutaminyl-tRNA synthetase. The reaction takes place in the presence of glutamine and ATP through an activated gamma-phospho-Glu-tRNA(Gln). The GatDE system is specific for glutamate and does not act on aspartate. The chain is Glutamyl-tRNA(Gln) amidotransferase subunit D from Sulfurisphaera tokodaii (strain DSM 16993 / JCM 10545 / NBRC 100140 / 7) (Sulfolobus tokodaii).